The primary structure comprises 340 residues: Phosphate acyltransferase (340 aa).

It belongs to the PlsX family. In terms of assembly, homodimer. Probably interacts with PlsY.

It localises to the cytoplasm. The enzyme catalyses a fatty acyl-[ACP] + phosphate = an acyl phosphate + holo-[ACP]. Its pathway is lipid metabolism; phospholipid metabolism. Catalyzes the reversible formation of acyl-phosphate (acyl-PO(4)) from acyl-[acyl-carrier-protein] (acyl-ACP). This enzyme utilizes acyl-ACP as fatty acyl donor, but not acyl-CoA. The polypeptide is Phosphate acyltransferase (Clostridioides difficile (strain 630) (Peptoclostridium difficile)).